The primary structure comprises 227 residues: MTIELTPGGLLIAIEGIDGAGKTTLARSLATLLEQAGARVVLSKEPTNGPWGTQLRQSAATGRLSAQDEVDLLLRDRREHVEALIAPALARGEIVILDRYFPSMVAYQGAAGLPLDALLAANDFAPRPDLLLLLDLPPPTGLARIRARGDAPNHFETQDNLERCRAIFAALQLPGKHVIDASADADSVLRQAHAVVVAALADRLRVGATHTDAEKAALELLSAGRPA.

16 to 23 (GIDGAGKT) lines the ATP pocket.

The protein belongs to the thymidylate kinase family.

The catalysed reaction is dTMP + ATP = dTDP + ADP. Its function is as follows. Phosphorylation of dTMP to form dTDP in both de novo and salvage pathways of dTTP synthesis. The sequence is that of Thymidylate kinase from Xanthomonas campestris pv. campestris (strain 8004).